We begin with the raw amino-acid sequence, 164 residues long: Transcriptional repressor NrdR (164 aa).

A zinc finger lies at 3–34; that stretch reads CPKCNYHKSSVVDSRQAEDGNTIRRRRECEQC. The 91-residue stretch at 49 to 139 folds into the ATP-cone domain; that stretch reads LLVIKKDGTR…VYKSFKDVDE (91 aa).

Belongs to the NrdR family. The cofactor is Zn(2+).

In terms of biological role, negatively regulates transcription of bacterial ribonucleotide reductase nrd genes and operons by binding to NrdR-boxes. The chain is Transcriptional repressor NrdR from Streptococcus pyogenes serotype M5 (strain Manfredo).